Consider the following 93-residue polypeptide: SH3 domain-binding glutamic acid-rich-like protein 3 (93 aa).

At Ser2 the chain carries N-acetylserine. One can recognise a Glutaredoxin domain in the interval 2-93 (SGLRVYSTSV…NTLQEFLKLA (92 aa)). O-linked (GalNAc...) threonine glycosylation occurs at Thr9.

Belongs to the SH3BGR family. Interacts with MYO1C (via its IQ motifs); the interaction is dependent on calcium and takes place at membrane ruffles. May be glycosylated. In terms of tissue distribution, expressed in heart, liver, lung, kidney, spleen, thymus, ovarian follicles, skeletal muscle, brain, lymph node and mammary epithelial and stromal cells (at protein level).

It localises to the cytoplasm. It is found in the cytosol. The protein localises to the cell projection. The protein resides in the ruffle membrane. Its subcellular location is the nucleus. Could act as a modulator of glutaredoxin biological activity. May play a role in cytoskeleton organization. This chain is SH3 domain-binding glutamic acid-rich-like protein 3, found in Rattus norvegicus (Rat).